The following is a 451-amino-acid chain: D-inositol 3-phosphate glycosyltransferase (451 aa).

His-21 is a 1D-myo-inositol 3-phosphate binding site. Residues 27-28 (QP) and Gly-35 contribute to the UDP-N-acetyl-alpha-D-glucosamine site. 1D-myo-inositol 3-phosphate is bound by residues 32–37 (DAGGMN), Lys-90, Tyr-123, Thr-147, and Arg-167. Residues Arg-241, Lys-246, and Gln-305 each coordinate UDP-N-acetyl-alpha-D-glucosamine. Residues Tyr-314, Arg-315, and Ala-317 each coordinate Mg(2+). UDP-N-acetyl-alpha-D-glucosamine contacts are provided by Glu-327 and Glu-335. Thr-341 contacts Mg(2+).

It belongs to the glycosyltransferase group 1 family. MshA subfamily. As to quaternary structure, homodimer.

It catalyses the reaction 1D-myo-inositol 3-phosphate + UDP-N-acetyl-alpha-D-glucosamine = 1D-myo-inositol 2-acetamido-2-deoxy-alpha-D-glucopyranoside 3-phosphate + UDP + H(+). Its function is as follows. Catalyzes the transfer of a N-acetyl-glucosamine moiety to 1D-myo-inositol 3-phosphate to produce 1D-myo-inositol 2-acetamido-2-deoxy-glucopyranoside 3-phosphate in the mycothiol biosynthesis pathway. The polypeptide is D-inositol 3-phosphate glycosyltransferase (Nocardia farcinica (strain IFM 10152)).